We begin with the raw amino-acid sequence, 131 residues long: UPF0134 protein MPN_010 (131 aa).

Belongs to the UPF0134 family.

The protein is UPF0134 protein MPN_010 of Mycoplasma pneumoniae (strain ATCC 29342 / M129 / Subtype 1) (Mycoplasmoides pneumoniae).